The primary structure comprises 157 residues: tRNA (cytidine(34)-2'-O)-methyltransferase (157 aa).

Positions 78, 100, 122, and 130 each coordinate S-adenosyl-L-methionine.

This sequence belongs to the class IV-like SAM-binding methyltransferase superfamily. RNA methyltransferase TrmH family. TrmL subfamily. Homodimer.

The protein resides in the cytoplasm. It catalyses the reaction cytidine(34) in tRNA + S-adenosyl-L-methionine = 2'-O-methylcytidine(34) in tRNA + S-adenosyl-L-homocysteine + H(+). The enzyme catalyses 5-carboxymethylaminomethyluridine(34) in tRNA(Leu) + S-adenosyl-L-methionine = 5-carboxymethylaminomethyl-2'-O-methyluridine(34) in tRNA(Leu) + S-adenosyl-L-homocysteine + H(+). In terms of biological role, methylates the ribose at the nucleotide 34 wobble position in the two leucyl isoacceptors tRNA(Leu)(CmAA) and tRNA(Leu)(cmnm5UmAA). Catalyzes the methyl transfer from S-adenosyl-L-methionine to the 2'-OH of the wobble nucleotide. The protein is tRNA (cytidine(34)-2'-O)-methyltransferase of Escherichia coli O6:H1 (strain CFT073 / ATCC 700928 / UPEC).